Consider the following 450-residue polypeptide: Molybdate-anion transporter (450 aa).

12 helical membrane-spanning segments follow: residues 1 to 21 (MLVTAYLAFVVLLASCLGLEL), 43 to 63 (LDFYQVYFLALAADWLQAPYL), 79 to 99 (ILYVCGLASTVLFGLVASSLV), 128 to 148 (FVLLVGRALGGLSTALLFSAF), 176 to 196 (FWNHVLAVAAGVAAEAVACWM), 198 to 218 (LGPVAPFVAAIPLLALAGALA), 249 to 269 (VLLLGTIQALFESVIFIFVFL), 278 to 298 (GAPLGIIFSSFMAASLLGSSL), 311 to 331 (PMHLLSLAVLIVVFSLFMLTF), 344 to 364 (FIAFLLIELACGLYFPSMSFL), 376 to 396 (GVLNWFRVPLHLLACLGLLVL), and 409 to 429 (FSICSAVMVMALLAVVGLFTV).

Belongs to the major facilitator superfamily.

The protein localises to the cell membrane. Functionally, mediates high-affinity intracellular uptake of the rare oligo-element molybdenum. The sequence is that of Molybdate-anion transporter (MFSD5) from Bos taurus (Bovine).